Reading from the N-terminus, the 1008-residue chain is ATP-dependent zinc metalloprotease FTSH 12, chloroplastic (1008 aa).

The N-terminal 49 residues, 1 to 49 (MEIAISYKPNPLISSSTQLLKRSKSFGLVRFPAKYGLGATRKKQLFRVY), are a transit peptide targeting the chloroplast. The next 2 helical transmembrane spans lie at 154 to 174 (AALF…YVAI) and 427 to 447 (IHYF…LWFI). 533-540 (GPPGTGKT) serves as a coordination point for ATP. Residue histidine 769 participates in Zn(2+) binding. Glutamate 770 is a catalytic residue. Residues histidine 773 and aspartate 849 each contribute to the Zn(2+) site.

The protein in the N-terminal section; belongs to the AAA ATPase family. In the C-terminal section; belongs to the peptidase M41 family. Requires Zn(2+) as cofactor.

It is found in the plastid. Its subcellular location is the chloroplast thylakoid membrane. Probable ATP-dependent zinc metallopeptidase. This chain is ATP-dependent zinc metalloprotease FTSH 12, chloroplastic (FTSH12), found in Arabidopsis thaliana (Mouse-ear cress).